The following is a 275-amino-acid chain: Large ribosomal subunit protein uL2 (275 aa).

The tract at residues 220–275 (VRGAAMNPRDHPHGGGEGRAPRGMPTPKTKWGKPARGVKTRHNPRTDPFIIRRRTR) is disordered. Positions 227 to 239 (PRDHPHGGGEGRA) are enriched in basic and acidic residues. Residues 249 to 262 (KWGKPARGVKTRHN) show a composition bias toward basic residues.

The protein belongs to the universal ribosomal protein uL2 family. As to quaternary structure, part of the 50S ribosomal subunit. Forms a bridge to the 30S subunit in the 70S ribosome.

In terms of biological role, one of the primary rRNA binding proteins. Required for association of the 30S and 50S subunits to form the 70S ribosome, for tRNA binding and peptide bond formation. It has been suggested to have peptidyltransferase activity; this is somewhat controversial. Makes several contacts with the 16S rRNA in the 70S ribosome. This chain is Large ribosomal subunit protein uL2, found in Roseiflexus sp. (strain RS-1).